A 232-amino-acid chain; its full sequence is 7-cyano-7-deazaguanine synthase (232 aa).

8–18 (FSGGQDSTTCL) contacts ATP. The Zn(2+) site is built by cysteine 189, cysteine 198, cysteine 201, and cysteine 204.

It belongs to the QueC family. The cofactor is Zn(2+).

The catalysed reaction is 7-carboxy-7-deazaguanine + NH4(+) + ATP = 7-cyano-7-deazaguanine + ADP + phosphate + H2O + H(+). The protein operates within purine metabolism; 7-cyano-7-deazaguanine biosynthesis. Catalyzes the ATP-dependent conversion of 7-carboxy-7-deazaguanine (CDG) to 7-cyano-7-deazaguanine (preQ(0)). In Proteus mirabilis (strain HI4320), this protein is 7-cyano-7-deazaguanine synthase.